The primary structure comprises 487 residues: V-type proton ATPase subunit B2 (487 aa).

At G2 the chain carries N-acetylglycine.

This sequence belongs to the ATPase alpha/beta chains family. As to quaternary structure, V-ATPase is a heteromultimeric enzyme composed of a peripheral catalytic V1 complex (components A to H) attached to an integral membrane V0 proton pore complex (components: a, c, c'', d and e).

It is found in the vacuole membrane. Functionally, non-catalytic subunit of the peripheral V1 complex of vacuolar ATPase. V-ATPase is responsible for acidifying a variety of intracellular compartments in eukaryotic cells. The polypeptide is V-type proton ATPase subunit B2 (VHA-B2) (Arabidopsis thaliana (Mouse-ear cress)).